A 364-amino-acid polypeptide reads, in one-letter code: Envelope glycoprotein US27 (364 aa).

The Virion surface portion of the chain corresponds to 1–36 (MTTSTTTTTNIMLQVSNVTNHTLNSTEIYQLFEYTR). N-linked (GlcNAc...) asparagine; by host glycans are attached at residues asparagine 17, asparagine 20, and asparagine 24. Residues 37-57 (FGVWLMCIVGTFLNMLVITTI) form a helical membrane-spanning segment. Over 58–69 (LYYRRKKKSPSD) the chain is Intravirion. A helical transmembrane segment spans residues 70-90 (TYICNLAVADLLIVVGLPFFL). The Virion surface portion of the chain corresponds to 91-103 (EYAKHHPKLSREV). Residues 104-124 (VCSGLNACFYICLFAGVCFLI) traverse the membrane as a helical segment. At 125–150 (NLSMDRYCVIVWGVELNRVRNNKRAT) the chain is on the intravirion side. Residues 151 to 171 (CWVVIFWILAALMGMPHYLMY) traverse the membrane as a helical segment. Residues 172–188 (SHTNNECVGEFANETSG) are Virion surface-facing. A helical transmembrane segment spans residues 189–209 (WFPVFLNTKVNICGYLAPIVL). Residues 210 to 234 (MAYTYNRMVRFIINYVGKWHMQTLH) are Intravirion-facing. The helical transmembrane segment at 235 to 255 (VLLVVVVSFASFWFPFNLALF) threads the bilayer. The Virion surface portion of the chain corresponds to 256-279 (LESIRLLSGTQNETLQTVITFCLY). Residues 280–300 (VGQFLAYVRACLNPGIYILVG) form a helical membrane-spanning segment. The Intravirion portion of the chain corresponds to 301–364 (TQMRKDMWTT…MESGEEEFLL (64 aa)). Positions 344-364 (KRTHYDRKHAPMESGEEEFLL) are disordered.

The protein belongs to the G-protein coupled receptor 1 family. Heterodimerizes with US28.

It is found in the virion. Its subcellular location is the host cell membrane. Plays an important role in spread of HCMV via the extracellular route. As a G-protein-coupled receptor (vGPCR), may activate signaling pathways important for virion assembly or egress processes. This is Envelope glycoprotein US27 (US27) from Homo sapiens (Human).